Reading from the N-terminus, the 225-residue chain is Non-structural protein V (225 aa).

Over residues 145-157 the composition is skewed to polar residues; the sequence is SNEPVSSAGSAQD. Residues 145–173 are disordered; sequence SNEPVSSAGSAQDPNFKRGGANRERARGN. 8 residues coordinate Zn(2+): His174, Cys193, Cys197, Cys209, Cys211, Cys214, Cys218, and Cys221.

Belongs to the paramyxoviruses V protein family. Interacts with host IFIH1/MDA5 and DHX58/LGP2. Forms with host DDB1, CUL4A, STAT1 and STAT2 the HPIV2 virus V-dependent complex (VDC); this complex targets host STAT2 to proteasomal degradation.

It localises to the host nucleus. In terms of biological role, plays an essential role in the inhibition of host immune response. Prevents the establishment of cellular antiviral state by blocking interferon-alpha/beta (IFN-alpha/beta) production and signaling pathway. Interacts with host IFIH1/MDA5 and DHX58/LGP2 to inhibit the transduction pathway involved in the activation of IFN-beta promoter, thus protecting the virus against cell antiviral state. Efficiently blocks type I IFN signaling following infection by targeting host STAT2 for proteasomal degradation. Also plays a role in viral growth by promoting host RhoA-induced F-actin formation. This is Non-structural protein V (P/V) from Homo sapiens (Human).